We begin with the raw amino-acid sequence, 374 residues long: Probable ethanolamine kinase (374 aa).

R93 and D252 together coordinate ATP.

This sequence belongs to the choline/ethanolamine kinase family.

It carries out the reaction ethanolamine + ATP = phosphoethanolamine + ADP + H(+). Its pathway is phospholipid metabolism; phosphatidylethanolamine biosynthesis; phosphatidylethanolamine from ethanolamine: step 1/3. Involved in phospholipid biosynthesis. Catalyzes the first step in phosphatidylethanolamine biosynthesis. The sequence is that of Probable ethanolamine kinase (EMB1187) from Arabidopsis thaliana (Mouse-ear cress).